Here is a 630-residue protein sequence, read N- to C-terminus: A-type voltage-gated potassium channel KCND2 (630 aa).

The Cytoplasmic portion of the chain corresponds to 1-184 (MAAGVAAWLP…FENPHTSTMA (184 aa)). The segment at 2-20 (AAGVAAWLPFARAAAIGWM) is interaction with KCNIP1, KCNIP2, and other family members. Thr38 is modified (phosphothreonine). An interaction with KCNIP1 region spans residues 71–90 (ERDFFYHPETQQYFFDRDPD). His105, Cys111, Cys132, and Cys133 together coordinate Zn(2+). A helical transmembrane segment spans residues 185–206 (LVFYYVTGFFIAVSVIANVVET). At 207-226 (VPCGSSPGHIKELPCGERYA) the chain is on the extracellular side. The chain crosses the membrane as a helical span at residues 227-249 (VAFFCLDTACVMIFTVEYLLRLA). Topologically, residues 250–256 (AAPSRYR) are cytoplasmic. A helical transmembrane segment spans residues 257–281 (FVRSVMSIIDVVAILPYYIGLVMTD). The Extracellular segment spans residues 282–287 (NEDVSG). The helical; Voltage-sensor transmembrane segment at 288–307 (AFVTLRVFRVFRIFKFSRHS) threads the bilayer. The Cytoplasmic segment spans residues 308-321 (QGLRILGYTLKSCA). The segment at 308–321 (QGLRILGYTLKSCA) is S4-S5 linker. Residues 322–345 (SELGFLLFSLTMAIIIFATVMFYA) traverse the membrane as a helical segment. The Extracellular segment spans residues 346-357 (EKGSSASKFTSI). An intramembrane region (helical) is located at residues 358 to 369 (PAAFWYTIVTMT). K(+) contacts are provided by Thr370, Leu371, Gly372, and Tyr373. The Selectivity filter signature appears at 370–375 (TLGYGD). The stretch at 370–377 (TLGYGDMV) is an intramembrane region. The Extracellular portion of the chain corresponds to 378-380 (PKT). The helical transmembrane segment at 381–403 (IAGKIFGSICSLSGVLVIALPVP) threads the bilayer. Over 404–630 (VIVSNFSRIY…GGNIVRVSAL (227 aa)) the chain is Cytoplasmic. Ser438 carries the post-translational modification Phosphoserine. The interval 474–489 (FETQHHHLLHCLEKTT) is required for dendritic targeting. The interval 474–630 (FETQHHHLLH…GGNIVRVSAL (157 aa)) is important for normal channel activation and inactivation, for interaction with KCNIP2, and probably other family members as well. Residues Ser548, Ser552, Ser572, and Ser575 each carry the phosphoserine modification. The disordered stretch occupies residues 600–630 (IPTPPVTTPEGDDRPESPEYSGGNIVRVSAL). Thr602 and Thr607 each carry phosphothreonine. Ser616 bears the Phosphoserine mark. Positions 627–630 (VSAL) match the PDZ-binding motif.

The protein belongs to the potassium channel family. D (Shal) (TC 1.A.1.2) subfamily. Kv4.2/KCND2 sub-subfamily. Homotetramer or heterotetramer with KCND1 or KCND3. Associates with the regulatory subunits KCNIP2, KCNIP3 and KCNIP4. Interacts with the regulatory subunit KCNIP1; this interaction mediates the capture of both the N- and C-terminus of KCND2, preventing N-type inactivation and stabilizing the S6 conformation, thereby accelerating closed state inactivation and recovery. In vivo, probably exists as heteromeric complex containing variable proportions of KCND1, KCND2, KCND3, KCNIP1, KCNIP2, KCNIP3, KCNIP4, DPP6 and DPP10. The tetrameric channel can associate with up to four regulatory subunits, such as KCNIP2 or KCNIP4. Interaction with four KCNIP4 chains does not reduce interaction with DPP10. Interacts with DLG4 and NCS1/FREQ. Interacts with DLG1. Probably part of a complex consisting of KCNIP1, KCNIP2 isoform 3 and KCND2. Interacts with FLNA, FLNC and DPP10. Interacts (via S1 and S2 helices) with DPP6; this interaction stabilizes the conformation of the S1-S2 helices and facilitates S4 conformational change, including S4 sliding up and down, thereby accelerating activation, inactivation, and recovery. Phosphorylation at Ser-438 in response to MAPK activation is increased in stimulated dendrites. Interaction with KCNIP2 and DPP6 propomtes phosphorylation by PKA at Ser-552. Phosphorylation at Ser-552 has no effect on interaction with KCNIP3, but is required for the regulation of channel activity by KCNIP3. Phosphorylation at Ser-552 leads to KCND2 internalization. Phosphorylated by MAPK in response to signaling via the metabotropic glutamate receptor GRM5. Phosphorylation at Ser-616 is required for the down-regulation of neuronal A-type currents in response to signaling via GRM5. In terms of tissue distribution, detected in ovary, in corpus luteum and in granulosa and theca cells in the follicle (at protein level). Highly expressed throughout the brain. Detected in amygdala, caudate nucleus, cerebellum, hippocampus, substantia nigra and thalamus. Expression is not detectable or very low in heart, kidney, liver, lung, pancreas and skeletal muscle. Not detectable in human heart atrium.

The protein resides in the cell membrane. The protein localises to the cell projection. Its subcellular location is the dendrite. It localises to the synapse. It is found in the perikaryon. The protein resides in the postsynaptic cell membrane. The protein localises to the dendritic spine. Its subcellular location is the cell junction. The catalysed reaction is K(+)(in) = K(+)(out). In terms of biological role, voltage-gated potassium channel that mediates transmembrane potassium transport in excitable membranes, primarily in the brain. Mediates the major part of the dendritic A-type current I(SA) in brain neurons. This current is activated at membrane potentials that are below the threshold for action potentials. It regulates neuronal excitability, prolongs the latency before the first spike in a series of action potentials, regulates the frequency of repetitive action potential firing, shortens the duration of action potentials and regulates the back-propagation of action potentials from the neuronal cell body to the dendrites. Contributes to the regulation of the circadian rhythm of action potential firing in suprachiasmatic nucleus neurons, which regulates the circadian rhythm of locomotor activity. Functions downstream of the metabotropic glutamate receptor GRM5 and plays a role in neuronal excitability and in nociception mediated by activation of GRM5. Mediates the transient outward current I(to) in rodent heart left ventricle apex cells, but not in human heart, where this current is mediated by another family member. Forms tetrameric potassium-selective channels through which potassium ions pass in accordance with their electrochemical gradient. The channel alternates between opened and closed conformations in response to the voltage difference across the membrane. Can form functional homotetrameric channels and heterotetrameric channels that contain variable proportions of KCND2 and KCND3; channel properties depend on the type of pore-forming alpha subunits that are part of the channel. In vivo, membranes probably contain a mixture of heteromeric potassium channel complexes. Interaction with specific isoforms of the regulatory subunits KCNIP1, KCNIP2, KCNIP3 or KCNIP4 strongly increases expression at the cell surface and thereby increases channel activity; it modulates the kinetics of channel activation and inactivation, shifts the threshold for channel activation to more negative voltage values, shifts the threshold for inactivation to less negative voltages and accelerates recovery after inactivation. Likewise, interaction with DPP6 or DPP10 promotes expression at the cell membrane and regulates both channel characteristics and activity. Upon depolarization, the channel goes from a resting closed state (C state) to an activated but non-conducting state (C* state), from there, the channel may either inactivate (I state) or open (O state). The protein is A-type voltage-gated potassium channel KCND2 of Homo sapiens (Human).